The following is a 544-amino-acid chain: GMP synthase [glutamine-hydrolyzing] (544 aa).

Residues 12 to 210 enclose the Glutamine amidotransferase type-1 domain; sequence TILILDFGSQ…VKNVCSVRDG (199 aa). Cys-88 serves as the catalytic Nucleophile. Residues His-184 and Glu-186 contribute to the active site. The GMPS ATP-PPase domain occupies 211-419; it reads WSMESFIPKE…LNIPEHLVGR (209 aa). Residue 239–245 participates in ATP binding; it reads SGGVDST. Residues Arg-312, Asp-481, Lys-536, and Glu-542 each contribute to the XMP site.

In terms of assembly, homodimer. Also forms a small population of homotetramers. Mg(2+) is required as a cofactor.

The protein resides in the cytoplasm. It is found in the cytosol. It catalyses the reaction XMP + L-glutamine + ATP + H2O = GMP + L-glutamate + AMP + diphosphate + 2 H(+). Its pathway is purine metabolism; GMP biosynthesis; GMP from XMP (L-Gln route): step 1/1. Its function is as follows. Catalyzes the conversion of xanthine monophosphate (XMP) to GMP in the presence of glutamine and ATP through an adenyl-XMP intermediate. This Cryptococcus neoformans var. neoformans serotype D (strain JEC21 / ATCC MYA-565) (Filobasidiella neoformans) protein is GMP synthase [glutamine-hydrolyzing].